A 331-amino-acid chain; its full sequence is Isopenicillin N synthase (331 aa).

Isopenicillin N is bound by residues arginine 87, tyrosine 91, serine 183, and tyrosine 189. 6 residues coordinate N-[(5S)-5-amino-5-carboxypentanoyl]-L-cysteinyl-D-valine: arginine 87, tyrosine 91, serine 183, tyrosine 189, histidine 214, and aspartate 216. The Fe2OG dioxygenase domain maps to 176-288; that stretch reads KKEDALSSVV…RQSLPFFVNL (113 aa). Positions 214, 216, and 270 each coordinate Fe(2+). Position 279 (arginine 279) interacts with 2-oxoglutarate. Residue serine 281 coordinates isopenicillin N. Serine 281 contributes to the N-[(5S)-5-amino-5-carboxypentanoyl]-L-cysteinyl-D-valine binding site.

Belongs to the iron/ascorbate-dependent oxidoreductase family. As to quaternary structure, monomer. Requires Fe(2+) as cofactor.

It localises to the cytoplasm. The protein localises to the cytosol. It catalyses the reaction N-[(5S)-5-amino-5-carboxypentanoyl]-L-cysteinyl-D-valine + O2 = isopenicillin N + 2 H2O. The protein operates within antibiotic biosynthesis; penicillin G biosynthesis; penicillin G from L-alpha-aminoadipate and L-cysteine and L-valine: step 2/3. In terms of biological role, isopenicillin N synthase; part of the gene cluster that mediates the biosynthesis of penicillin, the world's most important antibiotic. IpnA catalyzes the cyclization of the tripeptide N-[(5S)-5-amino-5-carboxypentanoyl]-L-cysteinyl-D-valine (LLD-ACV or ACV) to form isopenicillin N (IPN) that contains the beta-lactam nucleus. The penicillin biosynthesis occurs via 3 enzymatic steps, the first corresponding to the production of the tripeptide N-[(5S)-5-amino-5-carboxypentanoyl]-L-cysteinyl-D-valine (LLD-ACV or ACV) by the NRPS acvA. The tripeptide ACV is then cyclized to isopenicillin N (IPN) by the isopenicillin N synthase ipnA that forms the beta-lactam nucleus. Finally, the alpha-aminoadipyl side chain is exchanged for phenylacetic acid by the isopenicillin N acyltransferase aatA to yield penicillin in the peroxisomal matrix. This Penicillium chrysogenum (Penicillium notatum) protein is Isopenicillin N synthase.